Reading from the N-terminus, the 314-residue chain is Ecto-ADP-ribosyltransferase 4 (314 aa).

Positions 1–46 (MGPLINRCKKILLPTTVPPATMRIWLLGGLLPFLLLLSGLQRPTEG) are cleaved as a signal peptide. 2 cysteine pairs are disulfide-bonded: Cys-69–Cys-280 and Cys-182–Cys-231. The region spanning 91-276 (KNYFRMWQKA…LQLRSTGNLS (186 aa)) is the TR mART core domain. Residue Asn-114 is glycosylated (N-linked (GlcNAc...) asparagine). Tyr-126 lines the NAD(+) pocket. The N-linked (GlcNAc...) asparagine glycan is linked to Asn-178. Gln-206 contacts NAD(+). Asn-222 carries N-linked (GlcNAc...) asparagine glycosylation. Ser-240 contacts NAD(+). Asn-257 and Asn-274 each carry an N-linked (GlcNAc...) asparagine glycan. Ala-285 carries GPI-anchor amidated alanine lipidation. The propeptide at 286–314 (SSKKCIPDPIAIASLSFLTSVIIFSKSRV) is removed in mature form.

It belongs to the Arg-specific ADP-ribosyltransferase family. In terms of tissue distribution, expressed in spleen and T-cells.

It localises to the cell membrane. The enzyme catalyses L-arginyl-[protein] + NAD(+) = N(omega)-(ADP-D-ribosyl)-L-arginyl-[protein] + nicotinamide + H(+). The polypeptide is Ecto-ADP-ribosyltransferase 4 (ART4) (Homo sapiens (Human)).